The primary structure comprises 176 residues: Small ribosomal subunit protein uS5 (176 aa).

The S5 DRBM domain occupies 11–74 (LSEVLVDVNR…QAAKKRMMKV (64 aa)).

The protein belongs to the universal ribosomal protein uS5 family. In terms of assembly, part of the 30S ribosomal subunit. Contacts proteins S4 and S8.

In terms of biological role, with S4 and S12 plays an important role in translational accuracy. Its function is as follows. Located at the back of the 30S subunit body where it stabilizes the conformation of the head with respect to the body. The protein is Small ribosomal subunit protein uS5 of Rickettsia massiliae (strain Mtu5).